The sequence spans 351 residues: DNA polymerase IV (351 aa).

A UmuC domain is found at 4–185 (IIHVDMDCFF…LPLGKIPGVG (182 aa)). Mg(2+) contacts are provided by aspartate 8 and aspartate 103. Glutamate 104 is an active-site residue.

The protein belongs to the DNA polymerase type-Y family. In terms of assembly, monomer. The cofactor is Mg(2+).

The protein resides in the cytoplasm. The enzyme catalyses DNA(n) + a 2'-deoxyribonucleoside 5'-triphosphate = DNA(n+1) + diphosphate. In terms of biological role, poorly processive, error-prone DNA polymerase involved in untargeted mutagenesis. Copies undamaged DNA at stalled replication forks, which arise in vivo from mismatched or misaligned primer ends. These misaligned primers can be extended by PolIV. Exhibits no 3'-5' exonuclease (proofreading) activity. May be involved in translesional synthesis, in conjunction with the beta clamp from PolIII. This is DNA polymerase IV from Cronobacter sakazakii (strain ATCC BAA-894) (Enterobacter sakazakii).